The chain runs to 705 residues: UvrABC system protein C (705 aa).

The GIY-YIG domain occupies 16–95 (ETPGVYRFRD…IKQFDPRFNV (80 aa)). Residues 208–243 (GRYLRRLEREMQQAAQAQEYERAARLRDDIGALRRA) form the UVR domain. The span at 315–332 (AASTGTAGSTVPTTTAGS) shows a compositional bias: low complexity. Disordered regions lie at residues 315–335 (AAST…SQGE) and 683–705 (RADA…ETVS).

It belongs to the UvrC family. As to quaternary structure, interacts with UvrB in an incision complex.

The protein localises to the cytoplasm. Its function is as follows. The UvrABC repair system catalyzes the recognition and processing of DNA lesions. UvrC both incises the 5' and 3' sides of the lesion. The N-terminal half is responsible for the 3' incision and the C-terminal half is responsible for the 5' incision. The protein is UvrABC system protein C of Frankia casuarinae (strain DSM 45818 / CECT 9043 / HFP020203 / CcI3).